The following is a 269-amino-acid chain: CCAAT/enhancer-binding protein delta (269 aa).

Disordered regions lie at residues 1–48 (MSAA…PGAA), 97–133 (PLEL…APGS), and 151–219 (AAGQ…NQEM). S2 carries the post-translational modification N-acetylserine. 2 stretches are compositionally biased toward low complexity: residues 36 to 48 (GAEP…PGAA) and 97 to 107 (PLELLPGGPAR). K120 participates in a covalent cross-link: Glycyl lysine isopeptide (Lys-Gly) (interchain with G-Cter in SUMO). Positions 155–175 (PTPPTSPEPPRSSPRQTPAPG) are enriched in pro residues. The segment covering 177–201 (AREKSAGKRGPDRGSPEYRQRRERN) has biased composition (basic and acidic residues). Positions 191–254 (SPEYRQRRER…AGLRQFFKQL (64 aa)) constitute a bZIP domain. Residues 195-222 (RQRRERNNIAVRKSRDKAKRRNQEMQQK) form a basic motif region. The tract at residues 226–254 (LSAENEKLHQRVEQLTRDLAGLRQFFKQL) is leucine-zipper.

It belongs to the bZIP family. C/EBP subfamily. In terms of assembly, binds DNA as a homodimer and as a heterodimer. Can form stable heterodimers with CEBPB. Can form stable heterodimers with CEBPA and CEBPE. Directly interacts with SPI1/PU.1; this interaction does not affect DNA-binding properties of each partner. Interacts with PRDM16.

It is found in the nucleus. Its function is as follows. Transcription activator that recognizes two different DNA motifs: the CCAAT homology common to many promoters and the enhanced core homology common to many enhancers. Important transcription factor regulating the expression of genes involved in immune and inflammatory responses. Transcriptional activator that enhances IL6 transcription alone and as heterodimer with CEBPB. This is CCAAT/enhancer-binding protein delta (CEBPD) from Homo sapiens (Human).